A 100-amino-acid chain; its full sequence is Urease subunit gamma (100 aa).

This sequence belongs to the urease gamma subunit family. Heterotrimer of UreA (gamma), UreB (beta) and UreC (alpha) subunits. Three heterotrimers associate to form the active enzyme.

The protein resides in the cytoplasm. The catalysed reaction is urea + 2 H2O + H(+) = hydrogencarbonate + 2 NH4(+). It participates in nitrogen metabolism; urea degradation; CO(2) and NH(3) from urea (urease route): step 1/1. This is Urease subunit gamma from Staphylococcus saprophyticus subsp. saprophyticus (strain ATCC 15305 / DSM 20229 / NCIMB 8711 / NCTC 7292 / S-41).